Here is a 346-residue protein sequence, read N- to C-terminus: GTPase Obg (346 aa).

Residues 1–159 (MRFVDEVTFV…RELRLELQLL (159 aa)) enclose the Obg domain. A disordered region spans residues 128-148 (LHFKSSTNRAPRQSTEGTAGE). Polar residues predominate over residues 130–144 (FKSSTNRAPRQSTEG). Residues 160–335 (ADVGLLGMPN…LCGDIMNDLE (176 aa)) form the OBG-type G domain. Residues 166-173 (GMPNVGKS), 191-195 (FTTLY), 213-216 (DIPG), 285-288 (NRLD), and 316-318 (SGL) each bind GTP. Mg(2+)-binding residues include serine 173 and threonine 193.

This sequence belongs to the TRAFAC class OBG-HflX-like GTPase superfamily. OBG GTPase family. Monomer. Requires Mg(2+) as cofactor.

It localises to the cytoplasm. In terms of biological role, an essential GTPase which binds GTP, GDP and possibly (p)ppGpp with moderate affinity, with high nucleotide exchange rates and a fairly low GTP hydrolysis rate. Plays a role in control of the cell cycle, stress response, ribosome biogenesis and in those bacteria that undergo differentiation, in morphogenesis control. The polypeptide is GTPase Obg (Halorhodospira halophila (strain DSM 244 / SL1) (Ectothiorhodospira halophila (strain DSM 244 / SL1))).